Consider the following 201-residue polypeptide: Large ribosomal subunit protein bL25 (201 aa).

It belongs to the bacterial ribosomal protein bL25 family. CTC subfamily. Part of the 50S ribosomal subunit; part of the 5S rRNA/L5/L18/L25 subcomplex. Contacts the 5S rRNA. Binds to the 5S rRNA independently of L5 and L18.

Its function is as follows. This is one of the proteins that binds to the 5S RNA in the ribosome where it forms part of the central protuberance. This is Large ribosomal subunit protein bL25 from Burkholderia vietnamiensis (strain G4 / LMG 22486) (Burkholderia cepacia (strain R1808)).